Reading from the N-terminus, the 196-residue chain is GTP cyclohydrolase 1 (196 aa).

Positions 86, 89, and 158 each coordinate Zn(2+).

The protein belongs to the GTP cyclohydrolase I family. As to quaternary structure, homomer.

The enzyme catalyses GTP + H2O = 7,8-dihydroneopterin 3'-triphosphate + formate + H(+). The protein operates within cofactor biosynthesis; 7,8-dihydroneopterin triphosphate biosynthesis; 7,8-dihydroneopterin triphosphate from GTP: step 1/1. The polypeptide is GTP cyclohydrolase 1 (Clostridium botulinum (strain Loch Maree / Type A3)).